We begin with the raw amino-acid sequence, 273 residues long: Glutamate 5-kinase (273 aa).

Lys-15 serves as a coordination point for ATP. Substrate contacts are provided by Ser-55, Asp-142, and Asn-158. Residues 178-179 and 220-226 contribute to the ATP site; these read SD and TGGMLSK.

This sequence belongs to the glutamate 5-kinase family.

It localises to the cytoplasm. It carries out the reaction L-glutamate + ATP = L-glutamyl 5-phosphate + ADP. It functions in the pathway amino-acid biosynthesis; L-proline biosynthesis; L-glutamate 5-semialdehyde from L-glutamate: step 1/2. In terms of biological role, catalyzes the transfer of a phosphate group to glutamate to form L-glutamate 5-phosphate. This chain is Glutamate 5-kinase, found in Streptococcus pyogenes serotype M4 (strain MGAS10750).